We begin with the raw amino-acid sequence, 245 residues long: Mannose/glucose-specific lectin (245 aa).

Residues aspartate 87 and glycine 107 each contribute to the a carbohydrate site. The N-linked (GlcNAc...) asparagine glycan is linked to asparagine 119. Residues glutamate 129 and aspartate 131 each coordinate Mn(2+). Ca(2+) contacts are provided by aspartate 131 and phenylalanine 133. Serine 138 and asparagine 139 together coordinate a carbohydrate. Ca(2+)-binding residues include asparagine 139 and aspartate 142. 2 residues coordinate Mn(2+): aspartate 142 and histidine 147. A carbohydrate is bound by residues glycine 221, glutamate 222, and glutamine 223.

Belongs to the leguminous lectin family. Homodimer.

Functionally, mannose/glucose-specific lectin that also binds derivatives N-acetyl-D-glucosamine and alpha-methyl-D-mannopyranoside with even higher affinity. Has hemagglutinating activity towards rabbit erythrocytes. Is toxic towards brine shrimp A.nauplii. In rats, induces dose-dependent paw edema. The chain is Mannose/glucose-specific lectin from Centrolobium tomentosum (Arariba).